The following is a 117-amino-acid chain: Large ribosomal subunit protein uL18 (117 aa).

Belongs to the universal ribosomal protein uL18 family. As to quaternary structure, part of the 50S ribosomal subunit; part of the 5S rRNA/L5/L18/L25 subcomplex. Contacts the 5S and 23S rRNAs.

This is one of the proteins that bind and probably mediate the attachment of the 5S RNA into the large ribosomal subunit, where it forms part of the central protuberance. The sequence is that of Large ribosomal subunit protein uL18 from Chromobacterium violaceum (strain ATCC 12472 / DSM 30191 / JCM 1249 / CCUG 213 / NBRC 12614 / NCIMB 9131 / NCTC 9757 / MK).